A 199-amino-acid polypeptide reads, in one-letter code: UPF0637 protein LVIS_1261 (199 aa).

This sequence belongs to the UPF0637 family.

The sequence is that of UPF0637 protein LVIS_1261 from Levilactobacillus brevis (strain ATCC 367 / BCRC 12310 / CIP 105137 / JCM 1170 / LMG 11437 / NCIMB 947 / NCTC 947) (Lactobacillus brevis).